The chain runs to 457 residues: Siroheme synthase (457 aa).

The interval 1–204 (MDHLPIFCQL…ADEKAVNATT (204 aa)) is precorrin-2 dehydrogenase /sirohydrochlorin ferrochelatase. Residues 22-23 (DV) and 43-44 (LT) each bind NAD(+). Residue Ser128 is modified to Phosphoserine. The interval 216–457 (GEVVLVGAGP…RDKLNWFSNH (242 aa)) is uroporphyrinogen-III C-methyltransferase. Pro225 contacts S-adenosyl-L-methionine. The active-site Proton acceptor is Asp248. The active-site Proton donor is Lys270. Residues 301-303 (GGD), Ile306, 331-332 (TA), Met382, and Gly411 contribute to the S-adenosyl-L-methionine site.

This sequence in the N-terminal section; belongs to the precorrin-2 dehydrogenase / sirohydrochlorin ferrochelatase family. The protein in the C-terminal section; belongs to the precorrin methyltransferase family.

It catalyses the reaction uroporphyrinogen III + 2 S-adenosyl-L-methionine = precorrin-2 + 2 S-adenosyl-L-homocysteine + H(+). The enzyme catalyses precorrin-2 + NAD(+) = sirohydrochlorin + NADH + 2 H(+). It carries out the reaction siroheme + 2 H(+) = sirohydrochlorin + Fe(2+). Its pathway is cofactor biosynthesis; adenosylcobalamin biosynthesis; precorrin-2 from uroporphyrinogen III: step 1/1. It functions in the pathway cofactor biosynthesis; adenosylcobalamin biosynthesis; sirohydrochlorin from precorrin-2: step 1/1. It participates in porphyrin-containing compound metabolism; siroheme biosynthesis; precorrin-2 from uroporphyrinogen III: step 1/1. The protein operates within porphyrin-containing compound metabolism; siroheme biosynthesis; siroheme from sirohydrochlorin: step 1/1. Its pathway is porphyrin-containing compound metabolism; siroheme biosynthesis; sirohydrochlorin from precorrin-2: step 1/1. Functionally, multifunctional enzyme that catalyzes the SAM-dependent methylations of uroporphyrinogen III at position C-2 and C-7 to form precorrin-2 via precorrin-1. Then it catalyzes the NAD-dependent ring dehydrogenation of precorrin-2 to yield sirohydrochlorin. Finally, it catalyzes the ferrochelation of sirohydrochlorin to yield siroheme. The sequence is that of Siroheme synthase from Salmonella typhi.